A 468-amino-acid chain; its full sequence is Aspartate ammonia-lyase (468 aa).

Positions 99, 138, 139, 140, and 185 each coordinate L-aspartate. The segment at 315 to 324 is SS loop; that stretch reads GSSIMPGKVN. Residue serine 316 is the Proton acceptor of the active site. Residues serine 317 and lysine 322 each contribute to the L-aspartate site.

This sequence belongs to the class-II fumarase/aspartase family. Aspartase subfamily. In terms of assembly, homotetramer.

It catalyses the reaction L-aspartate = fumarate + NH4(+). Its function is as follows. Catalyzes the reversible conversion of L-aspartate to fumarate and ammonia. In Helicobacter pylori (strain J99 / ATCC 700824) (Campylobacter pylori J99), this protein is Aspartate ammonia-lyase (aspA).